The chain runs to 58 residues: 6.4 kDa protein (58 aa).

This chain is 6.4 kDa protein, found in Pseudomonas phage Pf3 (Bacteriophage Pf3).